We begin with the raw amino-acid sequence, 241 residues long: Endothelial protein C receptor (241 aa).

The N-terminal stretch at Met1–Ala17 is a signal peptide. The Extracellular segment spans residues Leu18–Ser212. N-linked (GlcNAc...) asparagine glycans are attached at residues Asn49, Asn66, Asn138, and Asn174. 2 cysteine pairs are disulfide-bonded: Cys120–Cys188 and Cys221–Cys234. The helical transmembrane segment at Leu213–Leu233 threads the bilayer. Residues Cys234–Cys241 are Cytoplasmic-facing.

As to expression, expressed in endothelial cells.

Its subcellular location is the membrane. In terms of biological role, binds activated protein C. Enhances protein C activation by the thrombin-thrombomodulin complex; plays a role in the protein C pathway controlling blood coagulation. This is Endothelial protein C receptor (PROCR) from Bos taurus (Bovine).